Reading from the N-terminus, the 208-residue chain is Small ribosomal subunit protein uS4 (208 aa).

The S4 RNA-binding domain maps to 98-164 (SRLDNVVYRM…DRIKFALELA (67 aa)).

The protein belongs to the universal ribosomal protein uS4 family. As to quaternary structure, part of the 30S ribosomal subunit. Contacts protein S5. The interaction surface between S4 and S5 is involved in control of translational fidelity.

Its function is as follows. One of the primary rRNA binding proteins, it binds directly to 16S rRNA where it nucleates assembly of the body of the 30S subunit. In terms of biological role, with S5 and S12 plays an important role in translational accuracy. This Nitrosococcus oceani (strain ATCC 19707 / BCRC 17464 / JCM 30415 / NCIMB 11848 / C-107) protein is Small ribosomal subunit protein uS4.